Consider the following 86-residue polypeptide: Large ribosomal subunit protein bL31B (86 aa).

It belongs to the bacterial ribosomal protein bL31 family. Type B subfamily. Part of the 50S ribosomal subunit.

The chain is Large ribosomal subunit protein bL31B from Streptococcus equi subsp. equi (strain 4047).